A 141-amino-acid chain; its full sequence is Hemoglobin subunit alpha (141 aa).

A Globin domain is found at valine 1–arginine 141. Residue serine 3 is modified to Phosphoserine. Lysine 7 carries the N6-succinyllysine modification. Threonine 8 bears the Phosphothreonine mark. Lysine 11 bears the N6-succinyllysine mark. Lysine 16 bears the N6-acetyllysine; alternate mark. Residue lysine 16 is modified to N6-succinyllysine; alternate. The residue at position 24 (tyrosine 24) is a Phosphotyrosine. N6-succinyllysine is present on lysine 40. Residue histidine 58 coordinates O2. Histidine 87 provides a ligand contact to heme b. Position 102 is a phosphoserine (serine 102). At threonine 108 the chain carries Phosphothreonine. 2 positions are modified to phosphoserine: serine 124 and serine 131. Phosphothreonine is present on residues threonine 134 and threonine 137. Phosphoserine is present on serine 138.

It belongs to the globin family. In terms of assembly, heterotetramer of two alpha chains and two beta chains. As to expression, red blood cells.

In terms of biological role, involved in oxygen transport from the lung to the various peripheral tissues. Hemopressin acts as an antagonist peptide of the cannabinoid receptor CNR1. Hemopressin-binding efficiently blocks cannabinoid receptor CNR1 and subsequent signaling. This chain is Hemoglobin subunit alpha (HBA), found in Tursiops truncatus (Atlantic bottle-nosed dolphin).